The chain runs to 330 residues: MTVIVTGAAGFIGANIVKALNERGESRIIAVDNLTRADKFRNLVDCEIDDYLDKTEFVERFTRGDFGKVRAVFHEGACSDTMETDGRYMMDNNFRYSRAVLDACLAQGAQFLYASSAAIYGGSTRFVEEREVEAPLNVYGYSKFLFDQVIRRVLPSAKSQIAGFRYFNVYGPRETHKGRMASVAFHNFNQFRAEGKVKLFGEYNGYAPGEQTRDFVSVEDVAKVNLFFFDHPEKSGIFNLGTGRAQPFNDIASTVVNTLRALDNLPPLTLAQQVEQGLIEYVAFPDALRGKYQCFTQADQTKLRGAGYDAPFLTVQEGVDRYVRWLSGQV.

Residues 11–12, 32–33, Lys-39, Lys-54, 75–79, and Asn-92 contribute to the NADP(+) site; these read FI, DN, and EGACS. Tyr-139 (proton acceptor) is an active-site residue. Residue Lys-143 coordinates NADP(+). Asn-168 provides a ligand contact to substrate. Residues Val-169 and Lys-177 each coordinate NADP(+). Catalysis depends on Lys-177, which acts as the Proton acceptor. Residues Arg-179, His-186, 200–203, Arg-213, and Tyr-292 contribute to the substrate site; that span reads FGEY.

It belongs to the NAD(P)-dependent epimerase/dehydratase family. HldD subfamily. In terms of assembly, homopentamer. The cofactor is NADP(+).

It carries out the reaction ADP-D-glycero-beta-D-manno-heptose = ADP-L-glycero-beta-D-manno-heptose. Its pathway is nucleotide-sugar biosynthesis; ADP-L-glycero-beta-D-manno-heptose biosynthesis; ADP-L-glycero-beta-D-manno-heptose from D-glycero-beta-D-manno-heptose 7-phosphate: step 4/4. Catalyzes the interconversion between ADP-D-glycero-beta-D-manno-heptose and ADP-L-glycero-beta-D-manno-heptose via an epimerization at carbon 6 of the heptose. This Burkholderia ambifaria (strain MC40-6) protein is ADP-L-glycero-D-manno-heptose-6-epimerase.